Consider the following 638-residue polypeptide: MDSDTSPNPFASSPPSSPSPRPSLPPPVPRKPSSLVSAASGSPPPTHRASFPDPARHPKMGATVPGPKPKTGYCCSIDKDISAGEQVHIVDALKTTEGGTASYITYVIRLGTHTVRRRYSAFLSLHQSLTGLYPVLIIPPIPSKQSLTDYAVKGQSKAREDATIIARRKRLLEDFLQRLIRHPILGGEHVLHRFLEEDVSWSEVLHSPPISLLSKNPLHAPSHNPTFQPTTPTSPSEAPATTSYIAHHLLPTPSPSHPLRQPDQRFMDSEAFTEKFQSHFSGTMEKVNRRVTKRWGERAHDMSELGGIWNGFSLVEQGKLGDAIEKVGRAVDAEYLATAALLQSWEKTTTEPLHIYSQFATLIRARLSFRHQKHVQYELVQEALETQRDKLEILENAEREARRLEEALERGGSVLASPQLEPEAARDERERAQRRARASQGFGLLSAVKHSLSGMIDMDPEATRRANIAKTRDNISQLEDSYQAAAQDLKYASMTLQADLDRFQRQKVADLREMAINLSQVHRDWCKQNLEAWKAAQAAVREIDPHPNRPAQTQTQVQSQQSHAGPSTLHAQTEDDVSKLGVDAMKNEIERVEIEIADKPLPKPSLAETGGDGVVPSPQPRQENDTEEREGHGPLGPL.

A compositionally biased stretch (low complexity) spans 1–14 (MDSDTSPNPFASSP). Residues 1-69 (MDSDTSPNPF…MGATVPGPKP (69 aa)) form a disordered region. Residues 15 to 30 (PSSPSPRPSLPPPVPR) are compositionally biased toward pro residues. A PX domain is found at 84–201 (GEQVHIVDAL…HRFLEEDVSW (118 aa)). Arg-118, Ser-120, Lys-144, and Arg-168 together coordinate a 1,2-diacyl-sn-glycero-3-phospho-(1D-myo-inositol-3-phosphate). Disordered regions lie at residues 215 to 239 (KNPL…SEAP), 408 to 432 (LERG…RERA), and 545 to 638 (PHPN…LGPL). Low complexity predominate over residues 225–239 (PTFQPTTPTSPSEAP). Basic and acidic residues predominate over residues 423 to 432 (EAARDERERA). Positions 552 to 562 (QTQTQVQSQQS) are enriched in low complexity. Residues 585–601 (MKNEIERVEIEIADKPL) are compositionally biased toward basic and acidic residues.

This sequence belongs to the sorting nexin family.

It localises to the endosome membrane. It is found in the endomembrane system. May be required for cytoplasm to vacuole transport (Cvt) and pexophagy. This Cryptococcus neoformans var. neoformans serotype D (strain B-3501A) (Filobasidiella neoformans) protein is Sorting nexin-41 (SNX41).